The sequence spans 61 residues: Putative MSV199 domain-containing protein 200R (61 aa).

In Invertebrate iridescent virus 6 (IIV-6), this protein is Putative MSV199 domain-containing protein 200R.